The chain runs to 269 residues: Zinc transporter ZupT (269 aa).

Transmembrane regions (helical) follow at residues 12–32 (AFSI…LVMF), 41–61 (LSFG…TEIF), 75–95 (DHAF…IALI), 126–146 (MMAA…TFFA), 152–172 (AVGM…GISI), 187–207 (VWAC…GYLV), 211–231 (FLSP…MVFL), and 249–269 (TVYG…LFHF). Residues N136 and E139 each contribute to the Fe(2+) site. Zn(2+) contacts are provided by E139 and H164. Fe(2+) is bound by residues N165, E168, and E197. E168 provides a ligand contact to Zn(2+).

It belongs to the ZIP transporter (TC 2.A.5) family. ZupT subfamily.

It is found in the cell inner membrane. It carries out the reaction Zn(2+)(in) = Zn(2+)(out). Its function is as follows. Mediates zinc uptake. May also transport other divalent cations. The sequence is that of Zinc transporter ZupT from Neisseria meningitidis serogroup B (strain ATCC BAA-335 / MC58).